Reading from the N-terminus, the 362-residue chain is MGTPAIRAACHGAHLALALLLLLSLSDPWLWATAPGTPPLFNVSLDAAPELRWLPMLQHYDPDFVRAAVAQVIGDRVPQWILEMIGEIVQKVESFLPQPFTSEIRGICDYLNLSLAEGVLVNLAYEASAFCTSIVAQDSQGRIYHGRNLDYPFGNALRKLTADVQFVKNGQIVFTATTFVGYVGLWTGQSPHKFTISGDERDKGWWWENMIAALSLGHSPISWLIRKTLTESEDFEAAVYTLAKTPLIADVYYIVGGTSPQEGVVITRDRGGPADIWPLDPLNGAWFRVETNYDHWEPVPKRDDRRTPAIKALNATGQAHLSLETLFQVLSVFPVYNNYTIYTTVMSAAEPDKYMTMIRNPS.

The signal sequence occupies residues 1 to 33 (MGTPAIRAACHGAHLALALLLLLSLSDPWLWAT). N-linked (GlcNAc...) asparagine glycosylation is found at Asn-42 and Asn-112. Cys-131 acts as the Nucleophile in catalysis. Asn-314 and Asn-338 each carry an N-linked (GlcNAc...) asparagine glycan.

The protein belongs to the acid ceramidase family. Heterodimer of an alpha and a beta subunit, produced by autocatalytic cleavage. Post-translationally, N-glycosylated. Tunicamycin treatment causes a reduction in specific activity against N-palmitoylethanolamine. In terms of processing, autoproteolytic cleavage at pH 4.5 gives rise to the alpha and beta subunit. Cleavage gives rise to a conformation change that activates the enzyme. The same catalytic Cys residue mediates the autoproteolytic cleavage and subsequent hydrolysis of lipid substrates. Expressed in brain, cecum, colon, heart, ileum, kidney, liver, lung, spleen, stomach, submaxillary gland, testis and thymus.

It is found in the lysosome. The protein resides in the membrane. It carries out the reaction N-hexadecanoylethanolamine + H2O = ethanolamine + hexadecanoate. The catalysed reaction is an N-(long-chain fatty acyl)ethanolamine + H2O = a long-chain fatty acid + ethanolamine. It catalyses the reaction N-dodecanoylethanolamine + H2O = dodecanoate + ethanolamine. The enzyme catalyses N-tetradecanoylethanolamine + H2O = tetradecanoate + ethanolamine. It carries out the reaction an N-acylsphing-4-enine + H2O = sphing-4-enine + a fatty acid. The catalysed reaction is N-hexadecanoylsphing-4-enine + H2O = sphing-4-enine + hexadecanoate. It catalyses the reaction N-dodecanoylsphing-4-enine + H2O = dodecanoate + sphing-4-enine. Its pathway is lipid metabolism; fatty acid metabolism. With respect to regulation, stimulated by DTT. Stimulated by nonionic detergent of the polyoxyethylenep-t-octylphenylether type (Triton X-100 or Nonidet P-40) whereas 3-[(3-cholamidopropyl)dimethylammonio]propane-1-sulfonate (CHAPS) and octyl alpha-D-glucopyranoside decrease the N-(long-chain-acyl)ethanolamine deacylase activity. Polysorbate 20 (Tween 20) is inhibitory. Stimulated by endogenous phospholipids such as choline- or ethanolamine-containing phospholipids, and dihydrolipoic acid. Functionally, degrades bioactive fatty acid amides to their corresponding acids, with the following preference: N-palmitoylethanolamine &gt; N-myristoylethanolamine &gt; N-stearoylethanolamine &gt; N-oleoylethanolamine &gt; N-linoleoylethanolamine &gt; N-arachidonoylethanolamine. This is N-acylethanolamine-hydrolyzing acid amidase from Rattus norvegicus (Rat).